We begin with the raw amino-acid sequence, 189 residues long: Ras-like protein rasC (189 aa).

11–18 contacts GTP; sequence GDGGVGKS. The Effector region motif lies at 33-41; sequence YDPTIENSY. GTP is bound by residues 58-62 and 117-120; these read DTAGQ and NKAD. C186 is subject to Cysteine methyl ester. Residue C186 is the site of S-geranylgeranyl cysteine attachment. Residues 187–189 constitute a propeptide, removed in mature form; sequence IIL.

The protein belongs to the small GTPase superfamily. Ras family.

Its subcellular location is the cell membrane. It carries out the reaction GTP + H2O = GDP + phosphate + H(+). Alternates between an inactive form bound to GDP and an active form bound to GTP. Activated by a guanine nucleotide-exchange factor (GEF) and inactivated by a GTPase-activating protein (GAP). In terms of biological role, ras proteins bind GDP/GTP and possess intrinsic GTPase activity. This is Ras-like protein rasC (rasC) from Dictyostelium discoideum (Social amoeba).